Reading from the N-terminus, the 306-residue chain is Small ribosomal subunit protein uS2 (306 aa).

Ser-2 carries the N-acetylserine modification. 2 laminin-binding regions span residues 161 to 180 and 205 to 229; these read IPCN…MLAR and RDPE…EYQG. [DE]-W-[ST] repeat units follow at residues 230–232, 245–247, 276–278, 286–288, and 304–306; these read EWT, DWS, and EWS. A laminin-binding region spans residues 242 to 306; sequence EVADWSEGVQ…EWTGTTTEWS (65 aa). The interval 261-306 is disordered; it reads PAERPEIPAAKPAAEDWSSQPASTDDWSAAPTAQASEWTGTTTEWS. Polar residues predominate over residues 277 to 306; the sequence is WSSQPASTDDWSAAPTAQASEWTGTTTEWS.

It belongs to the universal ribosomal protein uS2 family. As to quaternary structure, monomer (37LRP) and homodimer (67LR). Component of the small ribosomal subunit. Mature ribosomes consist of a small (40S) and a large (60S) subunit. The 40S subunit contains about 33 different proteins and 1 molecule of RNA (18S). The 60S subunit contains about 49 different proteins and 3 molecules of RNA (28S, 5.8S and 5S). Interacts with rps21. Interacts with several laminins including at least lamb1. Interacts with mdk. In terms of processing, acylated. Acylation may be a prerequisite for conversion of the monomeric 37 kDa laminin receptor precursor (37LRP) to the mature dimeric 67 kDa laminin receptor (67LR), and may provide a mechanism for membrane association. Post-translationally, cleaved by stromelysin-3 (ST3) at the cell surface. Cleavage by stromelysin-3 may be a mechanism to alter cell-extracellular matrix interactions.

Its subcellular location is the cell membrane. The protein localises to the cytoplasm. The protein resides in the nucleus. Its function is as follows. Required for the assembly and/or stability of the 40S ribosomal subunit. Required for the processing of the 20S rRNA-precursor to mature 18S rRNA in a late step of the maturation of 40S ribosomal subunits. Also functions as a cell surface receptor for laminin. Plays a role in cell adhesion to the basement membrane and in the consequent activation of signaling transduction pathways. May play a role in cell fate determination and tissue morphogenesis. In Xenopus tropicalis (Western clawed frog), this protein is Small ribosomal subunit protein uS2 (rpsa).